The primary structure comprises 366 residues: Tetraacyldisaccharide 4'-kinase (366 aa).

62–69 (RVGGTGKT) contacts ATP.

Belongs to the LpxK family.

The enzyme catalyses a lipid A disaccharide + ATP = a lipid IVA + ADP + H(+). The protein operates within glycolipid biosynthesis; lipid IV(A) biosynthesis; lipid IV(A) from (3R)-3-hydroxytetradecanoyl-[acyl-carrier-protein] and UDP-N-acetyl-alpha-D-glucosamine: step 6/6. In terms of biological role, transfers the gamma-phosphate of ATP to the 4'-position of a tetraacyldisaccharide 1-phosphate intermediate (termed DS-1-P) to form tetraacyldisaccharide 1,4'-bis-phosphate (lipid IVA). The protein is Tetraacyldisaccharide 4'-kinase of Polynucleobacter necessarius subsp. necessarius (strain STIR1).